A 266-amino-acid polypeptide reads, in one-letter code: F-actin-capping protein subunit beta (266 aa).

This sequence belongs to the F-actin-capping protein beta subunit family. In terms of assembly, component of the F-actin capping complex, composed of a heterodimer of an alpha and a beta subunit.

Its subcellular location is the cytoplasm. It localises to the cytoskeleton. It is found in the actin patch. In terms of biological role, F-actin-capping proteins bind in a Ca(2+)-independent manner to the fast growing ends of actin filaments (barbed end) thereby blocking the exchange of subunits at these ends. Unlike other capping proteins (such as gelsolin and severin), these proteins do not sever actin filaments. In Aspergillus oryzae (strain ATCC 42149 / RIB 40) (Yellow koji mold), this protein is F-actin-capping protein subunit beta (cap2).